The sequence spans 344 residues: Selenide, water dikinase (344 aa).

The active site involves Sec16. Position 16 (Sec16) is a non-standard amino acid, selenocysteine. Residues Lys19 and 46-48 (TND) contribute to the ATP site. A Mg(2+)-binding site is contributed by Asp49. ATP is bound by residues Asp66, Asp89, and 135-137 (GHT). A Mg(2+)-binding site is contributed by Asp89. Residue Asp223 participates in Mg(2+) binding.

This sequence belongs to the selenophosphate synthase 1 family. Class I subfamily. In terms of assembly, homodimer. Mg(2+) serves as cofactor.

The catalysed reaction is hydrogenselenide + ATP + H2O = selenophosphate + AMP + phosphate + 2 H(+). Functionally, synthesizes selenophosphate from selenide and ATP. This chain is Selenide, water dikinase, found in Caldanaerobacter subterraneus subsp. tengcongensis (strain DSM 15242 / JCM 11007 / NBRC 100824 / MB4) (Thermoanaerobacter tengcongensis).